The following is a 115-amino-acid chain: Large ribosomal subunit protein bL19 (115 aa).

The protein belongs to the bacterial ribosomal protein bL19 family.

Its function is as follows. This protein is located at the 30S-50S ribosomal subunit interface and may play a role in the structure and function of the aminoacyl-tRNA binding site. This chain is Large ribosomal subunit protein bL19, found in Clostridium kluyveri (strain ATCC 8527 / DSM 555 / NBRC 12016 / NCIMB 10680 / K1).